The following is a 656-amino-acid chain: NADH-ubiquinone oxidoreductase chain 5 (656 aa).

17 helical membrane passes run 5 to 23, 30 to 52, 81 to 103, 112 to 129, 133 to 155, 168 to 190, 200 to 222, 243 to 262, 272 to 294, 301 to 320, 324 to 346, 367 to 389, 409 to 431, 452 to 471, 514 to 536, 607 to 629, and 634 to 653; these read IIILPVLGSIVAGFFGRKL, IITCSCVIVTTILALLAWVEVGF, LTVSMLLPVLIISSLVHIYSISY, RFFSYLSLFTFMMIILVT, YLLMFVGWEGVGVCSYLLVSFWF, FLTNRVGDCFLTIGMFAILWSLG, LAPYINENIITIIGICLVIGAMA, VSALIHAATMVTAGVYLLMR, TVLLICLWLGAITTVFSSLVGLF, VIAYSTMSQLGLMVVAIGLS, IALFHLVNHAFYKAALFLGAGSI, PLTYSIILIASLSLAAFPFLTGF, SVYAISTIGAIFTTLYSVKVIYL, IFLTLPLVILAIFSIFFGYL, FIFTVLFSILAILLSEFIPGSVF, LSTGVVTSYALYILLGLISFIII, and QISSSLIVLLIILTLFSLNF.

Belongs to the complex I subunit 5 family.

The protein resides in the mitochondrion inner membrane. It catalyses the reaction a ubiquinone + NADH + 5 H(+)(in) = a ubiquinol + NAD(+) + 4 H(+)(out). Its function is as follows. Core subunit of the mitochondrial membrane respiratory chain NADH dehydrogenase (Complex I) that is believed to belong to the minimal assembly required for catalysis. Complex I functions in the transfer of electrons from NADH to the respiratory chain. The immediate electron acceptor for the enzyme is believed to be ubiquinone. This chain is NADH-ubiquinone oxidoreductase chain 5 (ND5), found in Cryphonectria parasitica (Chestnut blight fungus).